The following is a 321-amino-acid chain: Cytochrome f (321 aa).

A signal peptide spans 1–35; that stretch reads MQNTNTLNWINKLIYLSISIPIFFLILVTTYPNSV. The heme site is built by Tyr-38, Cys-58, Cys-61, and His-62. The helical transmembrane segment at 287 to 307 threads the bilayer; sequence MEGLILFFISVILAQVFLVLK.

It belongs to the cytochrome f family. The 4 large subunits of the cytochrome b6-f complex are cytochrome b6, subunit IV (17 kDa polypeptide, petD), cytochrome f and the Rieske protein, while the 4 small subunits are PetG, PetL, PetM and PetN. The complex functions as a dimer. Heme serves as cofactor.

The protein localises to the plastid. It is found in the chloroplast thylakoid membrane. In terms of biological role, component of the cytochrome b6-f complex, which mediates electron transfer between photosystem II (PSII) and photosystem I (PSI), cyclic electron flow around PSI, and state transitions. This is Cytochrome f from Chara vulgaris (Common stonewort).